The chain runs to 792 residues: Phenylalanine--tRNA ligase beta subunit (792 aa).

Residues 39–147 (GESLGQVVVA…DDAPVGQALA (109 aa)) form the tRNA-binding domain. The region spanning 400–475 (PQPVHIRLRR…RIHGYDRVPT (76 aa)) is the B5 domain. Asp-453, Asp-459, Glu-462, and Glu-463 together coordinate Mg(2+). The 94-residue stretch at 698–791 (SRFPSVRRDL…IEREHRARIR (94 aa)) folds into the FDX-ACB domain.

It belongs to the phenylalanyl-tRNA synthetase beta subunit family. Type 1 subfamily. Tetramer of two alpha and two beta subunits. The cofactor is Mg(2+).

The protein resides in the cytoplasm. The catalysed reaction is tRNA(Phe) + L-phenylalanine + ATP = L-phenylalanyl-tRNA(Phe) + AMP + diphosphate + H(+). The sequence is that of Phenylalanine--tRNA ligase beta subunit from Xanthomonas axonopodis pv. citri (strain 306).